We begin with the raw amino-acid sequence, 160 residues long: MSRRRRATKRVISPDSKYNSVLLARFINVIMRSGERSIAEKIVYGALSKAESRLGESAMSIFSAALNNVMPQMEVRSRRIGGVTYQVPVEVKEDRAVSLALRWIFKAAAAARKRSNKMYMDCLCNELLEAYNKRGGAYKMREEKYKMAEANKAFSHFRFN.

This sequence belongs to the universal ribosomal protein uS7 family. In terms of assembly, part of the 30S ribosomal subunit. Contacts proteins S9 and S11.

Its function is as follows. One of the primary rRNA binding proteins, it binds directly to 16S rRNA where it nucleates assembly of the head domain of the 30S subunit. Is located at the subunit interface close to the decoding center, probably blocks exit of the E-site tRNA. This is Small ribosomal subunit protein uS7 from Ehrlichia chaffeensis (strain ATCC CRL-10679 / Arkansas).